Consider the following 331-residue polypeptide: Polyprenyl transferase mpaA' (331 aa).

The next 8 membrane-spanning stretches (helical) occupy residues Met27–Leu47, Ile56–Ala76, Leu127–Leu147, Val159–Trp179, Gly190–Phe210, Leu240–Ile260, Trp264–Phe284, and Ile295–Gly315.

Belongs to the UbiA prenyltransferase family. Mg(2+) is required as a cofactor.

The protein localises to the golgi apparatus membrane. It carries out the reaction 5,7-dihydroxy-4-methylphthalide + (2E,6E)-farnesyl diphosphate = 4-farnesyl-3,5-dihydroxy-6-methylphthalide + diphosphate. The protein operates within secondary metabolite biosynthesis; terpenoid biosynthesis. Functionally, polyprenyl transferase; part of the gene cluster that mediates the biosynthesis of mycophenolic acid (MPA), the first isolated antibiotic natural product in the world obtained from a culture of Penicillium brevicompactum in 1893. MpaA' is a Golgi apparatus-associated enzyme that catalyzes the prenylation of 5,7-dihydroxy-4,6-dimethylphthalide (DHMP) to yield farnesyl-DHMP (FDHMP). The first step of the pathway is the synthesis of 5-methylorsellinic acid (5MOA) by the cytosolic polyketide synthase mpaC. 5MOA is then converted to the phthalide compound 5,7-dihydroxy-4,6-dimethylphthalide (DHMP) by the endoplasmic reticulum-bound cytochrome P450 monooxygenase mpaDE. MpaDE first catalyzes hydroxylation of 5-MOA to 4,6-dihydroxy-2-(hydroxymethyl)-3-methylbenzoic acid (DHMB). MpaDE then acts as a lactone synthase that catalyzes the ring closure to convert DHMB into DHMP. The next step is the prenylation of DHMP by the Golgi apparatus-associated prenyltransferase mpaA to yield farnesyl-DHMP (FDHMP). The ER-bound oxygenase mpaB then mediates the oxidative cleavage the C19-C20 double bond in FDHMP to yield FDHMP-3C via a mycophenolic aldehyde intermediate. The O-methyltransferase mpaG catalyzes the methylation of FDHMP-3C to yield MFDHMP-3C. After the cytosolic methylation of FDHMP-3C, MFDHMP-3C enters into peroxisomes probably via free diffusion due to its low molecular weight. Upon a peroxisomal CoA ligation reaction, catalyzed by a beta-oxidation component enzyme acyl-CoA ligase ACL891, MFDHMP-3C-CoA would then be restricted to peroxisomes for the following beta-oxidation pathway steps. The peroxisomal beta-oxidation machinery than converts MFDHMP-3C-CoA into MPA_CoA, via a beta-oxidation chain-shortening process. Finally mpaH acts as a peroxisomal acyl-CoA hydrolase with high substrate specificity toward MPA-CoA to release the final product MPA. This is Polyprenyl transferase mpaA' from Penicillium brevicompactum.